The following is a 261-amino-acid chain: Global transcriptional regulator CodY (261 aa).

The interval 1–159 is GAF domain; it reads MPNLLEKTRK…ASTVVGIQLL (159 aa). The segment at residues 207–226 is a DNA-binding region (H-T-H motif); that stretch reads ASVIADRIGITRSVIVNALR.

Belongs to the CodY family.

The protein localises to the cytoplasm. Its function is as follows. DNA-binding global transcriptional regulator which is involved in the adaptive response to starvation and acts by directly or indirectly controlling the expression of numerous genes in response to nutrient availability. During rapid exponential growth, CodY is highly active and represses genes whose products allow adaptation to nutrient depletion. The sequence is that of Global transcriptional regulator CodY from Streptococcus agalactiae serotype III (strain NEM316).